A 491-amino-acid chain; its full sequence is Ketol-acid reductoisomerase (NADP(+)) (491 aa).

A KARI N-terminal Rossmann domain is found at Ala15 to Ser208. NADP(+)-binding positions include Cys45–Gln48, Arg68, Arg76, Ser78, and Asp108–Gln110. His132 is a catalytic residue. Gly158 is an NADP(+) binding site. 2 KARI C-terminal knotted domains span residues Ser209–Gln344 and Tyr345–Met484. Mg(2+)-binding residues include Asp217, Glu221, Glu389, and Glu393. Ser414 is a substrate binding site.

This sequence belongs to the ketol-acid reductoisomerase family. It depends on Mg(2+) as a cofactor.

The catalysed reaction is (2R)-2,3-dihydroxy-3-methylbutanoate + NADP(+) = (2S)-2-acetolactate + NADPH + H(+). It catalyses the reaction (2R,3R)-2,3-dihydroxy-3-methylpentanoate + NADP(+) = (S)-2-ethyl-2-hydroxy-3-oxobutanoate + NADPH + H(+). Its pathway is amino-acid biosynthesis; L-isoleucine biosynthesis; L-isoleucine from 2-oxobutanoate: step 2/4. It participates in amino-acid biosynthesis; L-valine biosynthesis; L-valine from pyruvate: step 2/4. Its function is as follows. Involved in the biosynthesis of branched-chain amino acids (BCAA). Catalyzes an alkyl-migration followed by a ketol-acid reduction of (S)-2-acetolactate (S2AL) to yield (R)-2,3-dihydroxy-isovalerate. In the isomerase reaction, S2AL is rearranged via a Mg-dependent methyl migration to produce 3-hydroxy-3-methyl-2-ketobutyrate (HMKB). In the reductase reaction, this 2-ketoacid undergoes a metal-dependent reduction by NADPH to yield (R)-2,3-dihydroxy-isovalerate. This chain is Ketol-acid reductoisomerase (NADP(+)), found in Escherichia coli (strain UTI89 / UPEC).